A 306-amino-acid polypeptide reads, in one-letter code: 2-dehydro-3-deoxy-D-gluconate/2-dehydro-3-deoxy-phosphogluconate aldolase (306 aa).

Substrate is bound by residues 61-62, 148-150, and 173-175; these read TT, YNY, and KDT. Lysine 173 functions as the Schiff-base intermediate with substrate in the catalytic mechanism.

Belongs to the DapA family. KDPG aldolase subfamily. As to quaternary structure, homotetramer; dimer of dimers.

The enzyme catalyses 2-dehydro-3-deoxy-6-phospho-D-gluconate = D-glyceraldehyde 3-phosphate + pyruvate. It catalyses the reaction 2-dehydro-3-deoxy-D-gluconate = D-glyceraldehyde + pyruvate. It participates in carbohydrate acid metabolism; 2-dehydro-3-deoxy-D-gluconate degradation; D-glyceraldehyde 3-phosphate and pyruvate from 2-dehydro-3-deoxy-D-gluconate: step 2/2. Its function is as follows. Involved in the degradation of glucose via the Entner-Doudoroff pathway. Catalyzes the reversible cleavage of 2-keto-3-deoxy-6-phosphogluconate (KDPG) and 2-keto-3-deoxygluconate (KDG) forming pyruvate and glyceraldehyde 3-phosphate or glyceraldehyde, respectively. It is not able to use 2-keto-3-deoxy-6-phosphogalactonate (KDPGal) and 2-keto-3-deoxygalactonate (KDGal) as substrate. This Thermoproteus tenax protein is 2-dehydro-3-deoxy-D-gluconate/2-dehydro-3-deoxy-phosphogluconate aldolase (kdgA).